A 163-amino-acid polypeptide reads, in one-letter code: Pheromone-binding protein (163 aa).

An N-terminal signal peptide occupies residues 1–21 (MLRKISLLLLPVFVAINLVHS). Cystine bridges form between Cys40–Cys75, Cys71–Cys129, and Cys118–Cys138.

This sequence belongs to the PBP/GOBP family. Homodimer. Antenna.

Functionally, this major soluble protein in olfactory sensilla of male moths might serve to solubilize the extremely hydrophobic pheromone molecules and to transport pheromone through the aqueous lymph to receptors located on olfactory cilia. This chain is Pheromone-binding protein, found in Antheraea polyphemus (Polyphemus moth).